The primary structure comprises 451 residues: uncharacterized protein (451 aa).

One can recognise a TRAM domain in the interval 1–59 (MLKKNDIVEVEISDLSHDGAGIAKVDGLVFFVDNALPTEKIRMRVLKVKKNIAFGKVES). S-adenosyl-L-methionine-binding residues include Q283, Y312, E333, and D381. C408 serves as the catalytic Nucleophile.

The protein belongs to the class I-like SAM-binding methyltransferase superfamily. RNA M5U methyltransferase family.

This is an uncharacterized protein from Streptococcus mutans serotype c (strain ATCC 700610 / UA159).